We begin with the raw amino-acid sequence, 372 residues long: Protein phosphatase 1 regulatory subunit 42 (372 aa).

7 LRR repeats span residues 30 to 51 (RITH…TMCR), 52 to 71 (NLTV…NLGS), 72 to 93 (NLTH…SGLK), 94 to 115 (RLEK…EGLR), 116 to 137 (ELRE…LFDP), 146 to 167 (SLSV…AVLE), and 168 to 189 (NLTQ…EFVL). In terms of domain architecture, LRRCT spans 203 to 241 (NPVCLKPKYREKVTIISKTLEILDGKEIKEMARQFLLNW).

It localises to the cytoplasm. The protein localises to the cytoskeleton. The protein resides in the microtubule organizing center. Its subcellular location is the centrosome. In terms of biological role, may regulate phosphatase activity of protein phosphatase 1 (PP1) complexes. This Xenopus laevis (African clawed frog) protein is Protein phosphatase 1 regulatory subunit 42 (ppp1r42).